The sequence spans 78 residues: Conotoxin Cl11.1 (78 aa).

The signal sequence occupies residues 1–19 (MKLALTFLLILMILPLTTG). The propeptide occupies 20-33 (GKKSDNQALKRLGA). Intrachain disulfides connect C47-C61, C54-C66, C60-C70, and C65-C77.

Belongs to the conotoxin I1 superfamily. As to expression, expressed by the venom duct.

The protein localises to the secreted. This is Conotoxin Cl11.1 from Californiconus californicus (California cone).